The chain runs to 185 residues: Ribosome-recycling factor (185 aa).

It belongs to the RRF family.

Its subcellular location is the cytoplasm. Its function is as follows. Responsible for the release of ribosomes from messenger RNA at the termination of protein biosynthesis. May increase the efficiency of translation by recycling ribosomes from one round of translation to another. In Salinispora tropica (strain ATCC BAA-916 / DSM 44818 / JCM 13857 / NBRC 105044 / CNB-440), this protein is Ribosome-recycling factor.